The primary structure comprises 291 residues: Methylsterol monooxygenase 1 (291 aa).

2 helical membrane passes run 55-75 (LIVHELIYFLFCLPGFIFQFL) and 100-120 (MLLFNHFCIQLPLICGTYYFT). Residues 145-274 (CAVIEDTWHY…FTWWDRLFDT (130 aa)) enclose the Fatty acid hydroxylase domain. Positions 157-161 (HRALH) match the Histidine box-1 motif. Residues 170–174 (HKVHH) carry the Histidine box-2 motif. The chain crosses the membrane as a helical span at residues 199 to 219 (FFIGTMVFCNHMILLWAWVTF). The short motif at 249-255 (FHDFHHM) is the Histidine box-3 element.

The protein belongs to the sterol desaturase family. Fe cation serves as cofactor.

It localises to the endoplasmic reticulum membrane. The catalysed reaction is 4,4-dimethyl-5alpha-cholest-7-en-3beta-ol + 6 Fe(II)-[cytochrome b5] + 3 O2 + 5 H(+) = 4alpha-carboxy-4beta-methyl-5alpha-cholest-7-ene-3beta-ol + 6 Fe(III)-[cytochrome b5] + 4 H2O. Its pathway is steroid biosynthesis; zymosterol biosynthesis; zymosterol from lanosterol: step 3/6. Catalyzes the first step in the removal of the two C-4 methyl groups of 4,4-dimethylzymosterol. The chain is Methylsterol monooxygenase 1 (msmo1) from Danio rerio (Zebrafish).